Here is a 265-residue protein sequence, read N- to C-terminus: Glutamate 5-kinase (265 aa).

Residue lysine 15 coordinates ATP. Serine 55, aspartate 142, and asparagine 158 together coordinate substrate. ATP contacts are provided by residues 178 to 179 (SD) and 220 to 226 (TGGMVTK).

This sequence belongs to the glutamate 5-kinase family.

Its subcellular location is the cytoplasm. It carries out the reaction L-glutamate + ATP = L-glutamyl 5-phosphate + ADP. The protein operates within amino-acid biosynthesis; L-proline biosynthesis; L-glutamate 5-semialdehyde from L-glutamate: step 1/2. In terms of biological role, catalyzes the transfer of a phosphate group to glutamate to form L-glutamate 5-phosphate. In Lactiplantibacillus plantarum (strain ATCC BAA-793 / NCIMB 8826 / WCFS1) (Lactobacillus plantarum), this protein is Glutamate 5-kinase.